Reading from the N-terminus, the 458-residue chain is N-acetylgalactosamine kinase (458 aa).

R43, E49, H50, and D52 together coordinate alpha-D-galactose. ATP is bound by residues G143, S145, and S146. D190 is an alpha-D-galactose binding site. D190 (proton acceptor) is an active-site residue. ATP contacts are provided by N233 and K234.

Belongs to the GHMP kinase family. GalK subfamily. Monomer.

It carries out the reaction N-acetyl-alpha-D-galactosamine + ATP = N-acetyl-alpha-D-galactosamine 1-phosphate + ADP + H(+). Acts on GalNAc. Also acts as a galactokinase when galactose is present at high concentrations. This chain is N-acetylgalactosamine kinase (GALK2), found in Pongo abelii (Sumatran orangutan).